A 79-amino-acid polypeptide reads, in one-letter code: Cell division protein ZapB (79 aa).

The stretch at 4–78 (EVFEKLEAKV…LRALLGKMEE (75 aa)) forms a coiled coil.

It belongs to the ZapB family. Homodimer. The ends of the coiled-coil dimer bind to each other, forming polymers. Interacts with FtsZ.

The protein localises to the cytoplasm. Functionally, non-essential, abundant cell division factor that is required for proper Z-ring formation. It is recruited early to the divisome by direct interaction with FtsZ, stimulating Z-ring assembly and thereby promoting cell division earlier in the cell cycle. Its recruitment to the Z-ring requires functional FtsA or ZipA. The sequence is that of Cell division protein ZapB from Erwinia tasmaniensis (strain DSM 17950 / CFBP 7177 / CIP 109463 / NCPPB 4357 / Et1/99).